A 120-amino-acid polypeptide reads, in one-letter code: Immunoglobulin lambda variable 4-60 (120 aa).

The N-terminal stretch at 1 to 21 (MAWTPLLLLFPLLLHCTGSLS) is a signal peptide. The interval 22–46 (QPVLTQSSSASASLGSSVKLTCTLS) is framework-1. An Ig-like domain is found at 23–120 (PVLTQSSSAS…YYCETWDSNT (98 aa)). A disulfide bond links cysteine 43 and cysteine 113. The interval 47–53 (SGHSSYI) is complementarity-determining-1. A framework-2 region spans residues 54–70 (IAWHQQQPGKAPRYLMK). Residues 71–77 (LEGSGSY) are complementarity-determining-2. Residues 78 to 113 (NKGSGVPDRFSGSSSGADRYLTISNLQFEDEADYYC) are framework-3. The complementarity-determining-3 stretch occupies residues 114–120 (ETWDSNT).

As to quaternary structure, immunoglobulins are composed of two identical heavy chains and two identical light chains; disulfide-linked.

Its subcellular location is the secreted. It is found in the cell membrane. Its function is as follows. V region of the variable domain of immunoglobulin light chains that participates in the antigen recognition. Immunoglobulins, also known as antibodies, are membrane-bound or secreted glycoproteins produced by B lymphocytes. In the recognition phase of humoral immunity, the membrane-bound immunoglobulins serve as receptors which, upon binding of a specific antigen, trigger the clonal expansion and differentiation of B lymphocytes into immunoglobulins-secreting plasma cells. Secreted immunoglobulins mediate the effector phase of humoral immunity, which results in the elimination of bound antigens. The antigen binding site is formed by the variable domain of one heavy chain, together with that of its associated light chain. Thus, each immunoglobulin has two antigen binding sites with remarkable affinity for a particular antigen. The variable domains are assembled by a process called V-(D)-J rearrangement and can then be subjected to somatic hypermutations which, after exposure to antigen and selection, allow affinity maturation for a particular antigen. The protein is Immunoglobulin lambda variable 4-60 of Homo sapiens (Human).